We begin with the raw amino-acid sequence, 101 residues long: Small ribosomal subunit protein uS14 (101 aa).

Belongs to the universal ribosomal protein uS14 family. As to quaternary structure, part of the 30S ribosomal subunit. Contacts proteins S3 and S10.

Its function is as follows. Binds 16S rRNA, required for the assembly of 30S particles and may also be responsible for determining the conformation of the 16S rRNA at the A site. The protein is Small ribosomal subunit protein uS14 of Burkholderia lata (strain ATCC 17760 / DSM 23089 / LMG 22485 / NCIMB 9086 / R18194 / 383).